Here is a 561-residue protein sequence, read N- to C-terminus: MSNSSFNRQWAKVILETLTRHGLRHICIAPGSRSTPLTLAAAANHKLICHTHFDERGLGHLALGLAKATQQPVAVIVTSGTAVANLYPALIEAGLTGERVIFLTADRPPELINCGANQAIRQQGIFASHPSETLSLPRPTADISARWLVSTLDNAMNNLVHGALHVNCPFAEPLYGDDIEHDTPWTQALGKWWQSDKPWLQETLSPSVTTHPQWDRLRQKKGVVIAGRISAKEGIAVAKWASKLGWPLLGDVLSQTGQPLPCADLWLNNPQVKAELNQAEIVIQFGSSLTGKRLLQWQANCSPQMYWVIDAIPGRLDPGHHQGEKFTLSPSQWLTAHPAIDNLPWALSLSHIATQTYQHVTEVTDYFGEAQVAHQLDHLLPHNGQLFVGNSLIVRLIDAFAQLPQGYPVMSNRGASGIDGLLSTSAGVHRATQKPTLTILGDLSALYDLNSLALHQQVYAPNVVIIVNNNGGQIFSMLPTPMAERERFYCMPHALNFKHAAAMFGLDYVAPNCWDDLFTTVTACWQGEAKTTLIELIVNETEGAETLNQLVKQVTAYDFSL.

The protein belongs to the TPP enzyme family. MenD subfamily. As to quaternary structure, homodimer. Mg(2+) is required as a cofactor. It depends on Mn(2+) as a cofactor. Requires thiamine diphosphate as cofactor.

It catalyses the reaction isochorismate + 2-oxoglutarate + H(+) = 5-enolpyruvoyl-6-hydroxy-2-succinyl-cyclohex-3-ene-1-carboxylate + CO2. The protein operates within quinol/quinone metabolism; 1,4-dihydroxy-2-naphthoate biosynthesis; 1,4-dihydroxy-2-naphthoate from chorismate: step 2/7. Its pathway is quinol/quinone metabolism; menaquinone biosynthesis. Catalyzes the thiamine diphosphate-dependent decarboxylation of 2-oxoglutarate and the subsequent addition of the resulting succinic semialdehyde-thiamine pyrophosphate anion to isochorismate to yield 2-succinyl-5-enolpyruvyl-6-hydroxy-3-cyclohexene-1-carboxylate (SEPHCHC). This chain is 2-succinyl-5-enolpyruvyl-6-hydroxy-3-cyclohexene-1-carboxylate synthase, found in Proteus mirabilis (strain HI4320).